Here is a 443-residue protein sequence, read N- to C-terminus: Methylenetetrahydrofolate--tRNA-(uracil-5-)-methyltransferase TrmFO (443 aa).

8–13 lines the FAD pocket; the sequence is GAGLAG.

This sequence belongs to the MnmG family. TrmFO subfamily. FAD serves as cofactor.

It localises to the cytoplasm. It carries out the reaction uridine(54) in tRNA + (6R)-5,10-methylene-5,6,7,8-tetrahydrofolate + NADH + H(+) = 5-methyluridine(54) in tRNA + (6S)-5,6,7,8-tetrahydrofolate + NAD(+). The catalysed reaction is uridine(54) in tRNA + (6R)-5,10-methylene-5,6,7,8-tetrahydrofolate + NADPH + H(+) = 5-methyluridine(54) in tRNA + (6S)-5,6,7,8-tetrahydrofolate + NADP(+). Its function is as follows. Catalyzes the folate-dependent formation of 5-methyl-uridine at position 54 (M-5-U54) in all tRNAs. The protein is Methylenetetrahydrofolate--tRNA-(uracil-5-)-methyltransferase TrmFO of Thermus thermophilus (strain ATCC BAA-163 / DSM 7039 / HB27).